A 420-amino-acid polypeptide reads, in one-letter code: Serine--tRNA ligase (420 aa).

Position 227–229 (227–229 (TSE)) interacts with L-serine. Residues 258–260 (RRE) and valine 274 each bind ATP. Glutamate 281 is an L-serine binding site. 345–348 (ELTS) is a binding site for ATP. Threonine 380 lines the L-serine pocket.

Belongs to the class-II aminoacyl-tRNA synthetase family. Type-1 seryl-tRNA synthetase subfamily. As to quaternary structure, homodimer. The tRNA molecule binds across the dimer.

The protein localises to the cytoplasm. It carries out the reaction tRNA(Ser) + L-serine + ATP = L-seryl-tRNA(Ser) + AMP + diphosphate + H(+). The catalysed reaction is tRNA(Sec) + L-serine + ATP = L-seryl-tRNA(Sec) + AMP + diphosphate + H(+). It participates in aminoacyl-tRNA biosynthesis; selenocysteinyl-tRNA(Sec) biosynthesis; L-seryl-tRNA(Sec) from L-serine and tRNA(Sec): step 1/1. Catalyzes the attachment of serine to tRNA(Ser). Is also able to aminoacylate tRNA(Sec) with serine, to form the misacylated tRNA L-seryl-tRNA(Sec), which will be further converted into selenocysteinyl-tRNA(Sec). The chain is Serine--tRNA ligase from Nocardia farcinica (strain IFM 10152).